The following is a 215-amino-acid chain: UPF0319 protein VVA1446 (215 aa).

The first 21 residues, 1-21, serve as a signal peptide directing secretion; the sequence is MNIIKPLTCILAMSISGLATA.

Belongs to the UPF0319 family.

The sequence is that of UPF0319 protein VVA1446 from Vibrio vulnificus (strain YJ016).